Reading from the N-terminus, the 783-residue chain is Cation/H(+) antiporter 2 (783 aa).

Helical transmembrane passes span 19–39 (LNTM…FYLL), 43–63 (CGQA…PVLL), 81–101 (YYSF…GLEV), 121–141 (FVVS…LFGI), 145–165 (YFTF…PVVV), 186–206 (ALFI…FISG), 208–228 (IILE…INMV), 242–262 (YLSK…GITI), 300–320 (EFVL…IALT), 323–343 (FYLG…IGVI), 355–375 (YWLF…LLLD), and 391–411 (MMVA…SFLL).

It belongs to the monovalent cation:proton antiporter 2 (CPA2) transporter (TC 2.A.37) family. CHX (TC 2.A.37.4) subfamily. In terms of tissue distribution, specifically expressed in pollen.

It is found in the membrane. In terms of biological role, may operate as a cation/H(+) antiporter. This is Cation/H(+) antiporter 2 (CHX2) from Arabidopsis thaliana (Mouse-ear cress).